Consider the following 615-residue polypeptide: 1-deoxy-D-xylulose-5-phosphate synthase (615 aa).

Residues His-72 and 113–115 (GHA) contribute to the thiamine diphosphate site. Asp-144 serves as a coordination point for Mg(2+). Thiamine diphosphate is bound by residues 145-146 (GA), Asn-173, Tyr-281, and Glu-360. A Mg(2+)-binding site is contributed by Asn-173.

It belongs to the transketolase family. DXPS subfamily. Homodimer. Mg(2+) is required as a cofactor. The cofactor is thiamine diphosphate.

The catalysed reaction is D-glyceraldehyde 3-phosphate + pyruvate + H(+) = 1-deoxy-D-xylulose 5-phosphate + CO2. The protein operates within metabolic intermediate biosynthesis; 1-deoxy-D-xylulose 5-phosphate biosynthesis; 1-deoxy-D-xylulose 5-phosphate from D-glyceraldehyde 3-phosphate and pyruvate: step 1/1. Catalyzes the acyloin condensation reaction between C atoms 2 and 3 of pyruvate and glyceraldehyde 3-phosphate to yield 1-deoxy-D-xylulose-5-phosphate (DXP). The chain is 1-deoxy-D-xylulose-5-phosphate synthase from Thermus thermophilus (strain ATCC 27634 / DSM 579 / HB8).